Consider the following 94-residue polypeptide: Protein SpdA (94 aa).

A helical membrane pass occupies residues 41–68; that stretch reads GPILLALVAAGGSVGVVMTLCLLLQTAA.

It is found in the cell membrane. Its function is as follows. Involved in plasmid transfer. This is Protein SpdA (spdA) from Streptomyces lividans.